A 384-amino-acid chain; its full sequence is Dual-specificity RNA methyltransferase RlmN (384 aa).

E105 (proton acceptor) is an active-site residue. In terms of domain architecture, Radical SAM core spans 111–350 (EDDRATLCVS…TIVRKTRGDD (240 aa)). Cysteines 118 and 355 form a disulfide. C125, C129, and C132 together coordinate [4Fe-4S] cluster. Residues 179 to 180 (GE), S211, 233 to 235 (SLH), and N312 contribute to the S-adenosyl-L-methionine site. The S-methylcysteine intermediate role is filled by C355.

Belongs to the radical SAM superfamily. RlmN family. It depends on [4Fe-4S] cluster as a cofactor.

It localises to the cytoplasm. It carries out the reaction adenosine(2503) in 23S rRNA + 2 reduced [2Fe-2S]-[ferredoxin] + 2 S-adenosyl-L-methionine = 2-methyladenosine(2503) in 23S rRNA + 5'-deoxyadenosine + L-methionine + 2 oxidized [2Fe-2S]-[ferredoxin] + S-adenosyl-L-homocysteine. It catalyses the reaction adenosine(37) in tRNA + 2 reduced [2Fe-2S]-[ferredoxin] + 2 S-adenosyl-L-methionine = 2-methyladenosine(37) in tRNA + 5'-deoxyadenosine + L-methionine + 2 oxidized [2Fe-2S]-[ferredoxin] + S-adenosyl-L-homocysteine. Its function is as follows. Specifically methylates position 2 of adenine 2503 in 23S rRNA and position 2 of adenine 37 in tRNAs. m2A2503 modification seems to play a crucial role in the proofreading step occurring at the peptidyl transferase center and thus would serve to optimize ribosomal fidelity. This is Dual-specificity RNA methyltransferase RlmN from Escherichia fergusonii (strain ATCC 35469 / DSM 13698 / CCUG 18766 / IAM 14443 / JCM 21226 / LMG 7866 / NBRC 102419 / NCTC 12128 / CDC 0568-73).